A 367-amino-acid polypeptide reads, in one-letter code: Phosphoribosylaminoimidazole-succinocarboxamide synthase (367 aa).

It belongs to the SAICAR synthetase family.

It catalyses the reaction 5-amino-1-(5-phospho-D-ribosyl)imidazole-4-carboxylate + L-aspartate + ATP = (2S)-2-[5-amino-1-(5-phospho-beta-D-ribosyl)imidazole-4-carboxamido]succinate + ADP + phosphate + 2 H(+). Its pathway is purine metabolism; IMP biosynthesis via de novo pathway; 5-amino-1-(5-phospho-D-ribosyl)imidazole-4-carboxamide from 5-amino-1-(5-phospho-D-ribosyl)imidazole-4-carboxylate: step 1/2. The chain is Phosphoribosylaminoimidazole-succinocarboxamide synthase from Shewanella sp. (strain W3-18-1).